The sequence spans 158 residues: Phosphopantetheine adenylyltransferase (158 aa).

Threonine 8 is a binding site for substrate. Residues 8 to 9 (TF) and histidine 16 each bind ATP. Lysine 40, leucine 72, and arginine 86 together coordinate substrate. ATP-binding positions include 87 to 89 (GLR), glutamate 97, and 122 to 128 (HAFISSS).

Belongs to the bacterial CoaD family. Homohexamer. The cofactor is Mg(2+).

The protein localises to the cytoplasm. It carries out the reaction (R)-4'-phosphopantetheine + ATP + H(+) = 3'-dephospho-CoA + diphosphate. It participates in cofactor biosynthesis; coenzyme A biosynthesis; CoA from (R)-pantothenate: step 4/5. Reversibly transfers an adenylyl group from ATP to 4'-phosphopantetheine, yielding dephospho-CoA (dPCoA) and pyrophosphate. The sequence is that of Phosphopantetheine adenylyltransferase from Campylobacter jejuni subsp. jejuni serotype O:6 (strain 81116 / NCTC 11828).